The chain runs to 80 residues: Metallothionein-like protein type 2 (80 aa).

It belongs to the metallothionein superfamily. Type 15 family.

Its function is as follows. Metallothioneins have a high content of cysteine residues that bind various heavy metals. In Ricinus communis (Castor bean), this protein is Metallothionein-like protein type 2 (MTI).